The primary structure comprises 184 residues: Acetyl-CoA decarbonylase/synthase complex subunit epsilon 1 (184 aa).

The protein belongs to the CdhB family. As to quaternary structure, heterotetramer of two alpha and two epsilon subunits. The ACDS complex is made up of alpha, epsilon, beta, gamma and delta subunits with a probable stoichiometry of (alpha(2)epsilon(2))(4)-beta(8)-(gamma(1)delta(1))(8).

Its function is as follows. Part of a complex that catalyzes the reversible cleavage of acetyl-CoA, allowing autotrophic growth from CO(2). The alpha-epsilon subcomponent functions as a carbon monoxide dehydrogenase. The precise role of the epsilon subunit is unclear; it may have a stabilizing role within the alpha(2)epsilon(2) component and/or be involved in electron transfer to FAD during a potential FAD-mediated CO oxidation. This is Acetyl-CoA decarbonylase/synthase complex subunit epsilon 1 (cdhB1) from Archaeoglobus fulgidus (strain ATCC 49558 / DSM 4304 / JCM 9628 / NBRC 100126 / VC-16).